A 388-amino-acid chain; its full sequence is Sphingosine N-acyltransferase-like protein FUM17 (388 aa).

2 helical membrane passes run 60-80 (SWALPLLLTIVLPVIYAIHPV) and 113-133 (LWDLAFVAFYANALFLARKFI). N-linked (GlcNAc...) asparagine glycosylation is present at asparagine 146. In terms of domain architecture, TLC spans 151-368 (GKQQRFMEQM…LLRNAYRLLF (218 aa)). A run of 4 helical transmembrane segments spans residues 166-186 (FAVMGPFGLYVMKTTPGLWIF), 204-224 (IKFYYLLQAAYWVQQSVVLVL), 241-261 (IITITLIALSYRFHFTHIGIS), and 339-359 (FITFGLLATLQTLNIIWLYCL).

It belongs to the sphingosine N-acyltransferase family.

The protein resides in the endoplasmic reticulum membrane. It functions in the pathway mycotoxin biosynthesis. Functionally, sphingosine N-acyltransferase-like protein; part of the gene cluster that mediates the biosynthesis of fumonisins B1 (FB1), B2 (FB2), B3 (FB3), and B4 (FB4), which are carcinogenic mycotoxins. May contribute to the biosynthesis of ceramide via interaction with Cer3. Does not confer resistance to FB1. The biosynthesis starts with the FUM1-catalyzed carbon chain assembly from one molecule of acetyl-CoA, eight molecules of malonyl-CoA, and two molecules of methionine (in S-adenosyl form). The C18 polyketide chain is released from the enzyme by a nucleophilic attack of a carbanion, which is derived from R-carbon of alanine by decarboxylation, on the carbonyl carbon of polyketide acyl chain. This step is catalyzed by the pyridoxal 5'-phosphate-dependent aminoacyl transferase FUM8. The resultant 3-keto intermediate is then stereospecifically reduced to a 3-hydroxyl product by reductase FUM13. Subsequent oxidations at C-10 by the cytochrome P450 monooxygenase FUM2, C-14 and C-15 by FUM6, FUM12 or FUM15, tricarballylic esterification of the hydroxyl groups on C-14 and C-15 by acyltransferase FUM14, and C-5 hydroxylation by 2-keto-glutarate-dependent dioxygenase FUM3 furnish the biosynthesis of fumonisins. The tricarballylic moieties are most likely derived from the citric acid cycle, and their addition to the carbon backbone may involve FUM7, FUM10, FUM11 and FUM14. This is Sphingosine N-acyltransferase-like protein FUM17 from Gibberella moniliformis (strain M3125 / FGSC 7600) (Maize ear and stalk rot fungus).